We begin with the raw amino-acid sequence, 466 residues long: VGFKAGVKDYKLTYYTPDYETKDTDILAAFRVTPQPGVPPEEAGAAVAAESSTGTWTTVWTDGLTSLDRYKGRCYHIEPVAGEEDQYIAYVAYPLDLFEEGSVTNMFTSIVGNVFGFKALRALRLEDLRIPTAYVKTFQGPPHGIQVERDKLNKYGRPLLGCTIKPKLGLSAKNYGRAVYECLRGGLDFTKDDENVNSQPFMRWRDRFLFCAEALYKAQAETGEIKGHYLNATAGTCEEMMKRAVFARELGVPIVMHDYLTGGFTANTTLAHYCRDNGLLLHIHRAMHAVIDRQKNHGIHFRVLAKALRMSGGDHIHAGTVVGKLEGERDITLGFVDLLRDDFIQKDRSRGIYFTQDWVSMPGVLPVASGGIHVWHMPALTEIFGDDSVLQFGGGTLGHPWGNAPGAVANRVALEACVKARNEGRDLAREGNEIIREACKWSPELAAACEVWKEIKFEFKAVDTLD.

N6,N6,N6-trimethyllysine is present on K4. Residues N113 and T163 each coordinate substrate. K165 functions as the Proton acceptor in the catalytic mechanism. Residue K167 coordinates substrate. 3 residues coordinate Mg(2+): K191, D193, and E194. Residue K191 is modified to N6-carboxylysine. The Proton acceptor role is filled by H284. 3 residues coordinate substrate: R285, H317, and S369.

Belongs to the RuBisCO large chain family. Type I subfamily. In terms of assembly, heterohexadecamer of 8 large chains and 8 small chains; disulfide-linked. The disulfide link is formed within the large subunit homodimers. Mg(2+) is required as a cofactor. The disulfide bond which can form in the large chain dimeric partners within the hexadecamer appears to be associated with oxidative stress and protein turnover.

It is found in the plastid. It localises to the chloroplast. It catalyses the reaction 2 (2R)-3-phosphoglycerate + 2 H(+) = D-ribulose 1,5-bisphosphate + CO2 + H2O. The enzyme catalyses D-ribulose 1,5-bisphosphate + O2 = 2-phosphoglycolate + (2R)-3-phosphoglycerate + 2 H(+). Its function is as follows. RuBisCO catalyzes two reactions: the carboxylation of D-ribulose 1,5-bisphosphate, the primary event in carbon dioxide fixation, as well as the oxidative fragmentation of the pentose substrate in the photorespiration process. Both reactions occur simultaneously and in competition at the same active site. In Drimys winteri (Winter's bark), this protein is Ribulose bisphosphate carboxylase large chain.